A 118-amino-acid polypeptide reads, in one-letter code: Large ribosomal subunit protein uL24 (118 aa).

The protein belongs to the universal ribosomal protein uL24 family. In terms of assembly, part of the 50S ribosomal subunit.

One of two assembly initiator proteins, it binds directly to the 5'-end of the 23S rRNA, where it nucleates assembly of the 50S subunit. Its function is as follows. One of the proteins that surrounds the polypeptide exit tunnel on the outside of the subunit. This chain is Large ribosomal subunit protein uL24, found in Synechococcus sp. (strain CC9902).